We begin with the raw amino-acid sequence, 299 residues long: MANKVDVKELLDAGVHFGHLTRRWNPNMAPYIYMERNGIHIINLYKSAAKMQEAGDALAKIAASGRKILFVATKKQAKEIVAEQAEKANMPYITERWPGGMLTNFVTIRKAVKKMASIDRMKKDGTFNSLSKKERLQVDRLRAKLEKNLGSISDMSRLPAALFVVDTTREHIAIKEAHKLNIPIFAMVDTNSDPREVDYLIPSNDDASKSISKVVSYVADSIVEGLSERKSEKSTKKKEEKASKEEKSDKAPKEKKEKKAEVPSKDAEDKKAMKEAKNDVKLESKSETLDKAKASNEEE.

The disordered stretch occupies residues serine 227–glutamate 299.

It belongs to the universal ribosomal protein uS2 family.

The protein is Small ribosomal subunit protein uS2 of Christiangramia forsetii (strain DSM 17595 / CGMCC 1.15422 / KT0803) (Gramella forsetii).